The following is a 335-amino-acid chain: Homeobox protein DBX1 (335 aa).

Disordered stretches follow at residues 58-102 and 240-335; these read IPAA…LSPA and KERE…ITVS. Low complexity predominate over residues 83-95; it reads GSPGSGSRRGSSP. Residues 181–240 constitute a DNA-binding region (homeobox); that stretch reads GMLRRAVFSDVQRKALEKTFQKQKYISKPDRKKLASKLGLKDSQVKIWFQNRRMKWRNSK. The segment covering 299–317 has biased composition (low complexity); the sequence is GPLPASPAHSSSPGKPSDF. The span at 318–335 shows a compositional bias: acidic residues; sequence SDSDEDEEGEEDEEITVS.

The protein belongs to the H2.0 homeobox family.

Its subcellular location is the nucleus. Its function is as follows. Could have a role in patterning the central nervous system during embryogenesis. Has a key role in regulating the distinct phenotypic features that distinguish two major classes of ventral interneurons, V0 and V1 neurons. Regulates the transcription factor profile, neurotransmitter phenotype, intraspinal migratory path and axonal trajectory of V0 neurons, features that differentiate them from an adjacent set of V1 neurons. The polypeptide is Homeobox protein DBX1 (Dbx1) (Mus musculus (Mouse)).